Reading from the N-terminus, the 475-residue chain is Ribulose bisphosphate carboxylase large chain (475 aa).

The substrate site is built by Asn123 and Thr173. Lys175 functions as the Proton acceptor in the catalytic mechanism. Lys177 is a binding site for substrate. 3 residues coordinate Mg(2+): Lys201, Asp203, and Glu204. The residue at position 201 (Lys201) is an N6-carboxylysine. The active-site Proton acceptor is the His294. Substrate is bound by residues Arg295, His327, and Ser379.

It belongs to the RuBisCO large chain family. Type I subfamily. As to quaternary structure, heterohexadecamer of 8 large chains and 8 small chains. Mg(2+) is required as a cofactor.

The protein localises to the plastid. It is found in the chloroplast. It carries out the reaction 2 (2R)-3-phosphoglycerate + 2 H(+) = D-ribulose 1,5-bisphosphate + CO2 + H2O. The enzyme catalyses D-ribulose 1,5-bisphosphate + O2 = 2-phosphoglycolate + (2R)-3-phosphoglycerate + 2 H(+). RuBisCO catalyzes two reactions: the carboxylation of D-ribulose 1,5-bisphosphate, the primary event in carbon dioxide fixation, as well as the oxidative fragmentation of the pentose substrate in the photorespiration process. Both reactions occur simultaneously and in competition at the same active site. The protein is Ribulose bisphosphate carboxylase large chain of Bigelowiella natans (Pedinomonas minutissima).